We begin with the raw amino-acid sequence, 456 residues long: Bifunctional protein GlmU (456 aa).

The tract at residues 1–229 (MYKCALILAA…FEEILGVNSR (229 aa)) is pyrophosphorylase. UDP-N-acetyl-alpha-D-glucosamine contacts are provided by residues 8–11 (LAAG), lysine 22, glutamine 73, and 78–79 (GT). Mg(2+) is bound at residue aspartate 103. UDP-N-acetyl-alpha-D-glucosamine contacts are provided by glycine 140, glutamate 155, asparagine 170, and asparagine 227. Position 227 (asparagine 227) interacts with Mg(2+). The tract at residues 230–250 (LQLCQVGKVMQKRINEKHMEN) is linker. Residues 251 to 456 (GSTLIDPDNT…GWVDKKGLLK (206 aa)) form an N-acetyltransferase region. UDP-N-acetyl-alpha-D-glucosamine is bound by residues arginine 332 and lysine 350. Catalysis depends on histidine 362, which acts as the Proton acceptor. Positions 365 and 376 each coordinate UDP-N-acetyl-alpha-D-glucosamine. Residues 385–386 (NY), alanine 422, and arginine 439 contribute to the acetyl-CoA site.

In the N-terminal section; belongs to the N-acetylglucosamine-1-phosphate uridyltransferase family. This sequence in the C-terminal section; belongs to the transferase hexapeptide repeat family. As to quaternary structure, homotrimer. It depends on Mg(2+) as a cofactor.

The protein resides in the cytoplasm. The catalysed reaction is alpha-D-glucosamine 1-phosphate + acetyl-CoA = N-acetyl-alpha-D-glucosamine 1-phosphate + CoA + H(+). The enzyme catalyses N-acetyl-alpha-D-glucosamine 1-phosphate + UTP + H(+) = UDP-N-acetyl-alpha-D-glucosamine + diphosphate. The protein operates within nucleotide-sugar biosynthesis; UDP-N-acetyl-alpha-D-glucosamine biosynthesis; N-acetyl-alpha-D-glucosamine 1-phosphate from alpha-D-glucosamine 6-phosphate (route II): step 2/2. Its pathway is nucleotide-sugar biosynthesis; UDP-N-acetyl-alpha-D-glucosamine biosynthesis; UDP-N-acetyl-alpha-D-glucosamine from N-acetyl-alpha-D-glucosamine 1-phosphate: step 1/1. It participates in bacterial outer membrane biogenesis; LPS lipid A biosynthesis. Its function is as follows. Catalyzes the last two sequential reactions in the de novo biosynthetic pathway for UDP-N-acetylglucosamine (UDP-GlcNAc). The C-terminal domain catalyzes the transfer of acetyl group from acetyl coenzyme A to glucosamine-1-phosphate (GlcN-1-P) to produce N-acetylglucosamine-1-phosphate (GlcNAc-1-P), which is converted into UDP-GlcNAc by the transfer of uridine 5-monophosphate (from uridine 5-triphosphate), a reaction catalyzed by the N-terminal domain. In Clostridium acetobutylicum (strain ATCC 824 / DSM 792 / JCM 1419 / IAM 19013 / LMG 5710 / NBRC 13948 / NRRL B-527 / VKM B-1787 / 2291 / W), this protein is Bifunctional protein GlmU.